Consider the following 370-residue polypeptide: MAAVTPKLGRAQRLVVKIGSALLVNGAGLRAEWLRALCDDVAQARARGTDVVLVSSGAIALGRQVLGLPAGPLRVEQSQAAAAVGQIKLARAYEEALAPHGVKTAQLLVTLDDTTDRRRYLNSRATMQTLLGLGVVPIVNENDTVATDEIRFGDNDRLAAQIAVTCGADQLLLLSDVDGLYTANPKTDPTARHLPVVGQITPEIEAMGGDPISGVSKGGMKTKLLAARTAVAGGCAMAIAEGSVLNPLSAVAQGARVTWFLPDTDPQAARKRWIAAMKPKGEITVDAGAALALGQGKSLLPAGVTAVSGRFGRGDPVVVLDGKGGRLASGLVRYSSTEARAIAGHRSDEIEGILGYPGRAALIHRDDMVV.

Position 17 (lysine 17) interacts with ATP. Positions 56, 143, and 155 each coordinate substrate. 175-176 (SD) contributes to the ATP binding site. One can recognise a PUA domain in the interval 280–357 (KGEITVDAGA…DEIEGILGYP (78 aa)).

The protein belongs to the glutamate 5-kinase family.

It localises to the cytoplasm. The catalysed reaction is L-glutamate + ATP = L-glutamyl 5-phosphate + ADP. The protein operates within amino-acid biosynthesis; L-proline biosynthesis; L-glutamate 5-semialdehyde from L-glutamate: step 1/2. Its function is as follows. Catalyzes the transfer of a phosphate group to glutamate to form L-glutamate 5-phosphate. This Paracoccus denitrificans (strain Pd 1222) protein is Glutamate 5-kinase.